The following is a 355-amino-acid chain: S-adenosylmethionine:tRNA ribosyltransferase-isomerase (355 aa).

It belongs to the QueA family. In terms of assembly, monomer.

The protein localises to the cytoplasm. It catalyses the reaction 7-aminomethyl-7-carbaguanosine(34) in tRNA + S-adenosyl-L-methionine = epoxyqueuosine(34) in tRNA + adenine + L-methionine + 2 H(+). The protein operates within tRNA modification; tRNA-queuosine biosynthesis. Its function is as follows. Transfers and isomerizes the ribose moiety from AdoMet to the 7-aminomethyl group of 7-deazaguanine (preQ1-tRNA) to give epoxyqueuosine (oQ-tRNA). The protein is S-adenosylmethionine:tRNA ribosyltransferase-isomerase of Burkholderia ambifaria (strain ATCC BAA-244 / DSM 16087 / CCUG 44356 / LMG 19182 / AMMD) (Burkholderia cepacia (strain AMMD)).